A 95-amino-acid polypeptide reads, in one-letter code: Small ribosomal subunit protein bS16 (95 aa).

Belongs to the bacterial ribosomal protein bS16 family.

In Streptococcus pneumoniae (strain CGSP14), this protein is Small ribosomal subunit protein bS16.